A 367-amino-acid polypeptide reads, in one-letter code: D-alanine--D-alanine ligase (367 aa).

One can recognise an ATP-grasp domain in the interval 150–357; sequence KKLLASAGLP…YPTLLATMVE (208 aa). 178-233 is an ATP binding site; sequence RERLGLPVFVKPSRGGSSIGVSRVTAWDELPAAIELARRHDPKVIIEAAVPGRELE. Residues Asp312, Glu324, and Asn326 each coordinate Mg(2+).

Belongs to the D-alanine--D-alanine ligase family. Mg(2+) is required as a cofactor. Requires Mn(2+) as cofactor.

The protein resides in the cytoplasm. The enzyme catalyses 2 D-alanine + ATP = D-alanyl-D-alanine + ADP + phosphate + H(+). It participates in cell wall biogenesis; peptidoglycan biosynthesis. In terms of biological role, cell wall formation. This is D-alanine--D-alanine ligase from Mycolicibacterium gilvum (strain PYR-GCK) (Mycobacterium gilvum (strain PYR-GCK)).